A 578-amino-acid chain; its full sequence is CTP synthase 2 (578 aa).

The region spanning 305–564 (KIALVGKYTN…VAAASGTLGE (260 aa)) is the Glutamine amidotransferase type-1 domain. Residues cysteine 404, histidine 537, and glutamate 539 each act as for GATase activity in the active site.

The protein belongs to the CTP synthase family. Homodimer. Oligomerizes to a tetramer in the presence of its substrates UTP and ATP. Mg(2+) is required as a cofactor.

Its subcellular location is the cytoplasm. The enzyme catalyses UTP + L-glutamine + ATP + H2O = CTP + L-glutamate + ADP + phosphate + 2 H(+). It participates in pyrimidine metabolism; CTP biosynthesis via de novo pathway; CTP from UDP: step 2/2. Activated by GTP. Subject to allosteric product inhibition by CTP. Inhibited by p-chloromercuriphenylsulfonic acid, N-ethylmaleimide and cyclopentenylcytosine (CPEC). Catalyzes the ATP-dependent amination of UTP to CTP with either L-glutamine or ammonia as the source of nitrogen. Plays an important role in the regulation of phospholipid synthesis. This is CTP synthase 2 (URA8) from Saccharomyces cerevisiae (strain ATCC 204508 / S288c) (Baker's yeast).